Here is a 1160-residue protein sequence, read N- to C-terminus: Pesticidal crystal protein Cry1Db (1160 aa).

The protein belongs to the delta endotoxin family.

Functionally, promotes colloidosmotic lysis by binding to the midgut epithelial cells of insects. This chain is Pesticidal crystal protein Cry1Db (cry1Db), found in Bacillus thuringiensis.